Consider the following 629-residue polypeptide: Probable alpha-L-arabinofuranosidase A (629 aa).

A signal peptide spans 1-25 (MVALSTLSGLSALPFLFSLVQNVYG). Asn36, Asn51, Asn140, Asn152, Asn168, Asn171, Asn260, Asn494, and Asn534 each carry an N-linked (GlcNAc...) asparagine glycan.

The protein belongs to the glycosyl hydrolase 51 family.

It localises to the secreted. The enzyme catalyses Hydrolysis of terminal non-reducing alpha-L-arabinofuranoside residues in alpha-L-arabinosides.. The protein operates within glycan metabolism; L-arabinan degradation. Its function is as follows. Alpha-L-arabinofuranosidase involved in the degradation of arabinoxylan, a major component of plant hemicellulose. Acts only on small linear 1,5-alpha-linked L-arabinofuranosyl oligosaccharides. The chain is Probable alpha-L-arabinofuranosidase A (abfA) from Aspergillus oryzae (strain ATCC 42149 / RIB 40) (Yellow koji mold).